The primary structure comprises 879 residues: Beta-mannosidase (879 aa).

The N-terminal stretch at 1-17 (MLLRLLLLLAPCGAGFA) is a signal peptide. N-linked (GlcNAc...) asparagine glycosylation is found at Asn-35 and Asn-77. A disulfide bridge connects residues Cys-167 and Cys-176. 190–192 (WDW) is a substrate binding site. Residue Asn-297 is glycosylated (N-linked (GlcNAc...) asparagine). Asn-456 contributes to the substrate binding site. The Proton donor role is filled by Glu-457. 3 disulfides stabilise this stretch: Cys-540/Cys-629, Cys-732/Cys-761, and Cys-764/Cys-769. The Nucleophile role is filled by Glu-554. Asn-803 is a glycosylation site (N-linked (GlcNAc...) asparagine).

This sequence belongs to the glycosyl hydrolase 2 family. As to quaternary structure, monomer. In terms of processing, N-glycosylated. Detected in kidney (at protein level). Found in spleen and to a lesser extent in liver. Not detected in kidney or brain.

The protein localises to the lysosome. It catalyses the reaction Hydrolysis of terminal, non-reducing beta-D-mannose residues in beta-D-mannosides.. It participates in glycan metabolism; N-glycan degradation. Functionally, exoglycosidase that cleaves the single beta-linked mannose residue from the non-reducing end of all N-linked glycoprotein oligosaccharides. The chain is Beta-mannosidase (MANBA) from Capra hircus (Goat).